The chain runs to 873 residues: Putative receptor-like protein kinase At5g39000 (873 aa).

An N-terminal signal peptide occupies residues 1–21 (MIRHALLIFSILVSTPIVGEG). Over 22–445 (ATSTYEPTDV…KNKSHILPIT (424 aa)) the chain is Extracellular. N-linked (GlcNAc...) asparagine glycosylation is found at Asn-49, Asn-64, Asn-138, Asn-168, Asn-216, Asn-266, Asn-300, Asn-340, and Asn-437. The chain crosses the membrane as a helical span at residues 446 to 466 (LAVVGSLVVLAMFVVGVLVIM). Residues 467–873 (KKKKKSKPST…FSEINEPKAR (407 aa)) lie on the Cytoplasmic side of the membrane. A disordered region spans residues 472–494 (SKPSTNSSWCPLPHGTDSTNTKP). The Protein kinase domain occupies 518–803 (FEDKLIIGVG…EFALQLHETA (286 aa)). ATP is bound by residues 524–532 (IGVGGFGSV) and Lys-547. The Proton acceptor role is filled by Asp-646. Positions 813-843 (LDLMPSGEVGTTTDGEDDLFSRTTGHVGKST) are disordered. Residues 833-843 (SRTTGHVGKST) show a composition bias toward polar residues.

The protein belongs to the protein kinase superfamily. Ser/Thr protein kinase family.

The protein resides in the membrane. The protein is Putative receptor-like protein kinase At5g39000 of Arabidopsis thaliana (Mouse-ear cress).